Consider the following 463-residue polypeptide: Interferon-inducible GTPase 5 (463 aa).

Residues 53-235 (IRLEVGVTGE…PTLVSTWEHD (183 aa)) enclose the IRG-type G domain. Residues 62–69 (ESGAGKSS), 87–91 (TGVME), 169–171 (KVD), and 216–218 (SNL) contribute to the GTP site. A phosphoserine mark is found at S247 and S304. Positions 404-437 (LEDDEPQPEVSLEVASDNGVEKGGSGEGGGEEAP) are disordered.

It belongs to the TRAFAC class dynamin-like GTPase superfamily. IRG family. As to expression, abundantly expressed in semen (at protein level).

It localises to the cell projection. Its subcellular location is the cilium. The protein resides in the flagellum. The protein localises to the lipid droplet. It carries out the reaction GTP + H2O = GDP + phosphate + H(+). Its function is as follows. Required for sperm motility and therefore male fertility, via positive regulation of spermatozoa fibrous sheath formation. This Homo sapiens (Human) protein is Interferon-inducible GTPase 5.